The chain runs to 196 residues: ATP-dependent Clp protease proteolytic subunit (196 aa).

S98 functions as the Nucleophile in the catalytic mechanism. H123 is an active-site residue.

This sequence belongs to the peptidase S14 family. Fourteen ClpP subunits assemble into 2 heptameric rings which stack back to back to give a disk-like structure with a central cavity, resembling the structure of eukaryotic proteasomes.

It localises to the cytoplasm. It catalyses the reaction Hydrolysis of proteins to small peptides in the presence of ATP and magnesium. alpha-casein is the usual test substrate. In the absence of ATP, only oligopeptides shorter than five residues are hydrolyzed (such as succinyl-Leu-Tyr-|-NHMec, and Leu-Tyr-Leu-|-Tyr-Trp, in which cleavage of the -Tyr-|-Leu- and -Tyr-|-Trp bonds also occurs).. Cleaves peptides in various proteins in a process that requires ATP hydrolysis. Has a chymotrypsin-like activity. Plays a major role in the degradation of misfolded proteins. The protein is ATP-dependent Clp protease proteolytic subunit of Acidobacterium capsulatum (strain ATCC 51196 / DSM 11244 / BCRC 80197 / JCM 7670 / NBRC 15755 / NCIMB 13165 / 161).